A 510-amino-acid chain; its full sequence is AAA-ATPase At3g28540 (510 aa).

Residues 7–25 form a helical membrane-spanning segment; that stretch reads LFGFTGTTMASLMFFWSVY. An ATP-binding site is contributed by 246–253; sequence GPPGTGKS. Positions 460–510 are disordered; that stretch reads KEKAKKLAEEEKMKKAARDARRIKKKAEEEHKKKNKVEENGDVSHDNGNHI.

Belongs to the AAA ATPase family. BCS1 subfamily. The cofactor is Mg(2+).

The protein localises to the membrane. The enzyme catalyses ATP + H2O = ADP + phosphate + H(+). The chain is AAA-ATPase At3g28540 from Arabidopsis thaliana (Mouse-ear cress).